An 875-amino-acid polypeptide reads, in one-letter code: Kelch-like protein 29 (875 aa).

Polar residues predominate over residues 113–126 (IRWGQTPVNQSTPW). Disordered stretches follow at residues 113–145 (IRWG…PGTG) and 240–291 (GVGQ…DSAH). A compositionally biased stretch (basic and acidic residues) spans 131-140 (PPSKQMRESD). Residues 270 to 280 (PSAALPSSVPA) show a composition bias toward low complexity. One can recognise a BTB domain in the interval 329–401 (TDLKIVVEGR…VYTGSLVIDS (73 aa)). Kelch repeat units follow at residues 585-635 (VIVL…VSAG), 637-683 (NIYL…VYDG), 684-730 (KIYT…VCGG), 732-778 (IYVF…TLNG), 779-821 (FVFI…VLDG), and 822-870 (KIYA…VIKK).

The chain is Kelch-like protein 29 (Klhl29) from Mus musculus (Mouse).